Here is a 225-residue protein sequence, read N- to C-terminus: Octanoyltransferase (225 aa).

In terms of domain architecture, BPL/LPL catalytic spans 29–210 (PDTDDEIWVV…RLIAHLDGAT (182 aa)). Substrate is bound by residues 69 to 76 (RGGQITYH), 141 to 143 (ALG), and 154 to 156 (GLS). C172 (acyl-thioester intermediate) is an active-site residue.

The protein belongs to the LipB family.

The protein localises to the cytoplasm. The enzyme catalyses octanoyl-[ACP] + L-lysyl-[protein] = N(6)-octanoyl-L-lysyl-[protein] + holo-[ACP] + H(+). Its pathway is protein modification; protein lipoylation via endogenous pathway; protein N(6)-(lipoyl)lysine from octanoyl-[acyl-carrier-protein]: step 1/2. Functionally, catalyzes the transfer of endogenously produced octanoic acid from octanoyl-acyl-carrier-protein onto the lipoyl domains of lipoate-dependent enzymes. Lipoyl-ACP can also act as a substrate although octanoyl-ACP is likely to be the physiological substrate. In Burkholderia pseudomallei (strain K96243), this protein is Octanoyltransferase.